Consider the following 371-residue polypeptide: 2-aminoethylphosphonate--pyruvate transaminase (371 aa).

N6-(pyridoxal phosphate)lysine is present on K195.

Belongs to the class-V pyridoxal-phosphate-dependent aminotransferase family. PhnW subfamily. Homotetramer; however this is for an enzyme with a molecular weight of 16500, which is in disagreement with the weight of this protein. It depends on pyridoxal 5'-phosphate as a cofactor.

It carries out the reaction (2-aminoethyl)phosphonate + pyruvate = phosphonoacetaldehyde + L-alanine. With respect to regulation, inhibited by phosphonic acids and very slightly inhibited by aminophosphonic acids. Involved in phosphonate degradation. The polypeptide is 2-aminoethylphosphonate--pyruvate transaminase (phnW) (Pseudomonas aeruginosa (strain ATCC 15692 / DSM 22644 / CIP 104116 / JCM 14847 / LMG 12228 / 1C / PRS 101 / PAO1)).